A 1580-amino-acid chain; its full sequence is Transcriptional activator GLI3 (1580 aa).

N-acetylmethionine is present on M1. Composition is skewed to polar residues over residues 1–10 (MEAQSHSSTT) and 58–78 (ITMQPQNVQGLSKVSEEPSTS). The tract at residues 1–79 (MEAQSHSSTT…KVSEEPSTSS (79 aa)) is disordered. R175 is modified (omega-N-methylarginine). The tract at residues 368–475 (QSLGSAFGHS…DKDESKQEPE (108 aa)) is disordered. Residues 401-427 (NPVQVSSGPSESSQNKPTSESAVSSTG) are compositionally biased toward polar residues. Residues K438 and K462 each participate in a glycyl lysine isopeptide (Lys-Gly) (interchain with G-Cter in SUMO2) cross-link. Over residues 461–474 (VKEEGDKDESKQEP) the composition is skewed to basic and acidic residues. 5 consecutive C2H2-type zinc fingers follow at residues 480 to 505 (TNCHWEGCAREFDTQEQLVHHINNDH), 513 to 540 (FVCRWLDCSREQKPFKAQYMLVVHMRRH), 546 to 570 (HKCTFEGCTKAYSRLENLKTHLRSH), 576 to 601 (YVCEHEGCNKAFSNASDRAKHQNRTH), and 607 to 632 (YVCKIPGCTKRYTDPSSLRKHVKTVH). The segment at 620-728 (DPSSLRKHVK…PISNYSNSGL (109 aa)) is disordered. Over residues 632–648 (HGPEAHVTKKQRGDIHP) the composition is skewed to basic and acidic residues. S664 is modified (phosphoserine). Residues 684-699 (SKREECLQVKTVKAEK) show a composition bias toward basic and acidic residues. Positions 703 to 726 (SQPSPGGQSSCSSQQSPISNYSNS) are enriched in low complexity. Positions 745–845 (DETPIMDSTI…VDVTMLNMLN (101 aa)) are mediates interaction with DZIP1. Residue K773 forms a Glycyl lysine isopeptide (Lys-Gly) (interchain with G-Cter in ubiquitin) linkage. K779 participates in a covalent cross-link: Glycyl lysine isopeptide (Lys-Gly) (interchain with G-Cter in SUMO2); alternate. A Glycyl lysine isopeptide (Lys-Gly) (interchain with G-Cter in ubiquitin); alternate cross-link involves residue K779. Glycyl lysine isopeptide (Lys-Gly) (interchain with G-Cter in ubiquitin) cross-links involve residues K784 and K800. Phosphoserine; by PKA occurs at positions 849, 865, 877, and 907. Positions 863–882 (RSSGISPCFSSRRSSEASQA) are enriched in low complexity. Residues 863 to 918 (RSSGISPCFSSRRSSEASQAEGRPQNVSVADSYDPISTDASRRSSEASQSDGLPSL) form a disordered region. Polar residues predominate over residues 908 to 918 (EASQSDGLPSL). Phosphoserine; by PKA occurs at positions 980 and 1006. The tract at residues 981–1042 (DGGAHGYGRR…PAMATSAEKR (62 aa)) is disordered.

The protein belongs to the GLI C2H2-type zinc-finger protein family. The full-length GLI3 form (GLI3FL) interacts with SUFU and this interaction regulates the formation of either repressor or activator forms of GLI3. Its association with SUFU is regulated by Hh signaling and dissociation of the SUFU-GLI3 interaction requires the presence of the ciliary motor KIF3A. Interacts with KIF7. The activator form of GLI3 (GLI3A) but not the repressor form (GLI3R) can interact with TRPS1. The phosphorylated form interacts with BTRC. Interacts with ZIC1. Interacts with ZIC3 (via C2H2-type domains 3, 4 and 5); the interaction enhances its transcriptional activity. Interacts with WRD11; the interaction associates EMX1 with GLI3. Interacts with DZIP1; retains GLI3 within the cytoplasm. In terms of processing, phosphorylated on multiple sites by protein kinase A (PKA) and phosphorylation by PKA primes further phosphorylation by CK1 and GSK3. Phosphorylated by DYRK2 (in vitro). Phosphorylation is essential for its proteolytic processing. Post-translationally, transcriptional repressor GLI3R, a C-terminally truncated form, is generated from the full-length GLI3 protein (GLI3FL/GLI3-190) through proteolytic processing. This process requires PKA-primed phosphorylation of GLI3, ubiquitination of GLI3 and the presence of BTRC. GLI3FL is complexed with SUFU in the cytoplasm and is maintained in a neutral state. Without the Hh signal, the SUFU-GLI3 complex is recruited to cilia, leading to the efficient processing of GLI3FL into GLI3R. GLI3R formation leads to its dissociation from SUFU, allowing it to translocate into the nucleus, and repress Hh target genes. When Hh signaling is initiated, SUFU dissociates from GLI3FL and this has two consequences. First, GLI3R production is halted. Second, free GLI3FL translocates to the nucleus, where it is phosphorylated, destabilized, and converted to a transcriptional activator (GLI3A). Phosphorylated in vitro by ULK3.

It localises to the nucleus. The protein localises to the cytoplasm. Its subcellular location is the cell projection. The protein resides in the cilium. In terms of biological role, has a dual function as a transcriptional activator and a repressor of the sonic hedgehog (Shh) pathway, and plays a role in limb development. The full-length GLI3 form (GLI3FL) after phosphorylation and nuclear translocation, acts as an activator (GLI3A) while GLI3R, its C-terminally truncated form, acts as a repressor. A proper balance between the GLI3 activator and the repressor GLI3R, rather than the repressor gradient itself or the activator/repressor ratio gradient, specifies limb digit number and identity. In concert with TRPS1, plays a role in regulating the size of the zone of distal chondrocytes, in restricting the zone of PTHLH expression in distal cells and in activating chondrocyte proliferation. Binds to the minimal GLI-consensus sequence 5'-GGGTGGTC-3'. Plays a role in limb and brain development. The polypeptide is Transcriptional activator GLI3 (GLI3) (Pan troglodytes (Chimpanzee)).